Consider the following 241-residue polypeptide: MQDSLKDILLTFSFISRLPVKLGELSDWEVRMKRIPAYFTIVGYIPGLIYFTGSFLSLNFGIIAPLLSIVLGFYLFDLFHFDGLLDTLDGFLNQSSKSRRLEIMSKGNVGPFAVFYGVLYVIVFWELITSIEPVAFVFGSVFGRYTMDVVLVFSKPAKNEGLGAMLFPFNRFLLVPATLFTLPLLLIDVKLFLVSIFSSWLVGFLISKVSEKQIGGVTGDVLGGSCLIGQIVVLLILNYLI.

7 consecutive transmembrane segments (helical) span residues 34–54 (RIPA…FTGS), 55–75 (FLSL…GFYL), 109–129 (VGPF…ELIT), 133–153 (PVAF…VLVF), 165–185 (MLFP…LPLL), 186–206 (LIDV…GFLI), and 221–241 (VLGG…NYLI).

The protein belongs to the CobS family. It depends on Mg(2+) as a cofactor.

The protein resides in the cell inner membrane. The enzyme catalyses alpha-ribazole + adenosylcob(III)inamide-GDP = adenosylcob(III)alamin + GMP + H(+). The catalysed reaction is alpha-ribazole 5'-phosphate + adenosylcob(III)inamide-GDP = adenosylcob(III)alamin 5'-phosphate + GMP + H(+). The protein operates within cofactor biosynthesis; adenosylcobalamin biosynthesis; adenosylcobalamin from cob(II)yrinate a,c-diamide: step 7/7. Functionally, joins adenosylcobinamide-GDP and alpha-ribazole to generate adenosylcobalamin (Ado-cobalamin). Also synthesizes adenosylcobalamin 5'-phosphate from adenosylcobinamide-GDP and alpha-ribazole 5'-phosphate. In Fervidobacterium nodosum (strain ATCC 35602 / DSM 5306 / Rt17-B1), this protein is Adenosylcobinamide-GDP ribazoletransferase.